A 227-amino-acid polypeptide reads, in one-letter code: Cytochrome c oxidase subunit 2 (227 aa).

Residues 1-14 (MAYPHQLGFQDATS) are Mitochondrial intermembrane-facing. A helical membrane pass occupies residues 15–45 (PIMEELLSFHDHTLMIVFLISSLVLYLISLM). Residues 46–59 (LTTKLTHTSTMDAQ) lie on the Mitochondrial matrix side of the membrane. Residues 60-87 (EVETVWTILPAIILIMIALPSLRILYMM) traverse the membrane as a helical segment. The Mitochondrial intermembrane portion of the chain corresponds to 88–227 (DEINNPLLTV…SFENWTTSMT (140 aa)). The Cu cation site is built by histidine 161, cysteine 196, glutamate 198, cysteine 200, histidine 204, and methionine 207. Glutamate 198 lines the Mg(2+) pocket.

Belongs to the cytochrome c oxidase subunit 2 family. Component of the cytochrome c oxidase (complex IV, CIV), a multisubunit enzyme composed of 14 subunits. The complex is composed of a catalytic core of 3 subunits MT-CO1, MT-CO2 and MT-CO3, encoded in the mitochondrial DNA, and 11 supernumerary subunits COX4I, COX5A, COX5B, COX6A, COX6B, COX6C, COX7A, COX7B, COX7C, COX8 and NDUFA4, which are encoded in the nuclear genome. The complex exists as a monomer or a dimer and forms supercomplexes (SCs) in the inner mitochondrial membrane with NADH-ubiquinone oxidoreductase (complex I, CI) and ubiquinol-cytochrome c oxidoreductase (cytochrome b-c1 complex, complex III, CIII), resulting in different assemblies (supercomplex SCI(1)III(2)IV(1) and megacomplex MCI(2)III(2)IV(2)). Found in a complex with TMEM177, COA6, COX18, COX20, SCO1 and SCO2. Interacts with TMEM177 in a COX20-dependent manner. Interacts with COX20. Interacts with COX16. Requires Cu cation as cofactor.

The protein resides in the mitochondrion inner membrane. The catalysed reaction is 4 Fe(II)-[cytochrome c] + O2 + 8 H(+)(in) = 4 Fe(III)-[cytochrome c] + 2 H2O + 4 H(+)(out). Component of the cytochrome c oxidase, the last enzyme in the mitochondrial electron transport chain which drives oxidative phosphorylation. The respiratory chain contains 3 multisubunit complexes succinate dehydrogenase (complex II, CII), ubiquinol-cytochrome c oxidoreductase (cytochrome b-c1 complex, complex III, CIII) and cytochrome c oxidase (complex IV, CIV), that cooperate to transfer electrons derived from NADH and succinate to molecular oxygen, creating an electrochemical gradient over the inner membrane that drives transmembrane transport and the ATP synthase. Cytochrome c oxidase is the component of the respiratory chain that catalyzes the reduction of oxygen to water. Electrons originating from reduced cytochrome c in the intermembrane space (IMS) are transferred via the dinuclear copper A center (CU(A)) of subunit 2 and heme A of subunit 1 to the active site in subunit 1, a binuclear center (BNC) formed by heme A3 and copper B (CU(B)). The BNC reduces molecular oxygen to 2 water molecules using 4 electrons from cytochrome c in the IMS and 4 protons from the mitochondrial matrix. The chain is Cytochrome c oxidase subunit 2 (MT-CO2) from Georychus capensis (Cape mole rat).